Reading from the N-terminus, the 176-residue chain is Inner membrane-spanning protein YciB (176 aa).

6 consecutive transmembrane segments (helical) span residues 3-23 (FLFD…WGIF), 24-44 (TATA…AFRH), 49-69 (TMLW…LVLH), 72-92 (KFIQ…LLAA), 121-141 (VAWA…VHNF), and 149-169 (FKLF…SLWL).

This sequence belongs to the YciB family.

It is found in the cell inner membrane. Its function is as follows. Plays a role in cell envelope biogenesis, maintenance of cell envelope integrity and membrane homeostasis. This chain is Inner membrane-spanning protein YciB, found in Burkholderia orbicola (strain MC0-3).